The following is a 358-amino-acid chain: Peptide chain release factor 1 (358 aa).

At Gln-237 the chain carries N5-methylglutamine.

Belongs to the prokaryotic/mitochondrial release factor family. In terms of processing, methylated by PrmC. Methylation increases the termination efficiency of RF1.

Its subcellular location is the cytoplasm. Peptide chain release factor 1 directs the termination of translation in response to the peptide chain termination codons UAG and UAA. The protein is Peptide chain release factor 1 of Mycoplasma mobile (strain ATCC 43663 / 163K / NCTC 11711) (Mesomycoplasma mobile).